The sequence spans 427 residues: Trigger factor (427 aa).

The region spanning G163 to P248 is the PPIase FKBP-type domain.

This sequence belongs to the FKBP-type PPIase family. Tig subfamily.

The protein localises to the cytoplasm. It carries out the reaction [protein]-peptidylproline (omega=180) = [protein]-peptidylproline (omega=0). Functionally, involved in protein export. Acts as a chaperone by maintaining the newly synthesized protein in an open conformation. Functions as a peptidyl-prolyl cis-trans isomerase. This chain is Trigger factor, found in Streptococcus suis (strain 05ZYH33).